We begin with the raw amino-acid sequence, 234 residues long: Staphylococcal superantigen-like 5 (234 aa).

An N-terminal signal peptide occupies residues 1 to 30; that stretch reads MKMTAIAKASLALGILATGTITSLHQTVNA.

The protein belongs to the staphylococcal/streptococcal toxin family. As to quaternary structure, interacts with host SELPLG; this interaction prevents SELPLG-mediated neutrophil rolling. Interacts with host MMP9 (via sialic acid-containing O-glycans); this interaction inhibits MMP9 activity. Interacts with host GP1BA and GP6; these interactions play an important role in platelet binding and activation.

Secreted protein that plays a role in the inhibition of host innate immune system. Modulates the interaction between host SELPLG and P-selectin thereby preventing initial rolling of neutrophils toward the site of infection. Interferes with leukocyte trafficking by inhibiting host metalloproteinase-9/MMP9 activity. Also associates with two different platelet surface receptors GP1A and GP6 leading to platelet activation and aggregation. This is Staphylococcal superantigen-like 5 from Staphylococcus aureus (strain NCTC 8325 / PS 47).